Reading from the N-terminus, the 1076-residue chain is Cytadherence high molecular weight protein 3 (1076 aa).

Residues Gln-264–Tyr-284 are fibronectin-binding. Positions Gln-326–Ala-335 are enriched in low complexity. The tract at residues Gln-326–Thr-351 is disordered. The segment covering Pro-336–Gln-345 has biased composition (pro residues). Residues Glu-562–Val-616 are a coiled coil. Disordered stretches follow at residues Ser-789–Ile-808 and Arg-850–Pro-873. Polar residues predominate over residues Pro-797–Thr-806. Low complexity predominate over residues Tyr-862–Pro-873.

Its subcellular location is the cell projection. The protein localises to the attachment organelle membrane. Functionally, binds immobilized fibronectin. Its function is as follows. Component of the cytoskeleton-like structure which stabilizes the shape of the wall-less mycoplasma. This cytoskeleton-like network of accessory proteins containing HMW proteins 1 to 5 allows the proper anchoring of cytadhesin proteins in the mycoplasmal membrane at the attachment organelle. Essential for successful surface parasitism. This is Cytadherence high molecular weight protein 3 (hlp3) from Mycoplasmoides gallisepticum (strain R(low / passage 15 / clone 2)) (Mycoplasma gallisepticum).